Reading from the N-terminus, the 200-residue chain is NADH-quinone oxidoreductase subunit C (200 aa).

Belongs to the complex I 30 kDa subunit family. NDH-1 is composed of 14 different subunits. Subunits NuoB, C, D, E, F, and G constitute the peripheral sector of the complex.

It localises to the cell inner membrane. The catalysed reaction is a quinone + NADH + 5 H(+)(in) = a quinol + NAD(+) + 4 H(+)(out). Its function is as follows. NDH-1 shuttles electrons from NADH, via FMN and iron-sulfur (Fe-S) centers, to quinones in the respiratory chain. The immediate electron acceptor for the enzyme in this species is believed to be ubiquinone. Couples the redox reaction to proton translocation (for every two electrons transferred, four hydrogen ions are translocated across the cytoplasmic membrane), and thus conserves the redox energy in a proton gradient. The sequence is that of NADH-quinone oxidoreductase subunit C from Ruegeria pomeroyi (strain ATCC 700808 / DSM 15171 / DSS-3) (Silicibacter pomeroyi).